The following is a 119-amino-acid chain: Large ribosomal subunit protein uL18 (119 aa).

The protein belongs to the universal ribosomal protein uL18 family. As to quaternary structure, part of the 50S ribosomal subunit; part of the 5S rRNA/L5/L18/L25 subcomplex. Contacts the 5S and 23S rRNAs.

This is one of the proteins that bind and probably mediate the attachment of the 5S RNA into the large ribosomal subunit, where it forms part of the central protuberance. The protein is Large ribosomal subunit protein uL18 of Chlorobium luteolum (strain DSM 273 / BCRC 81028 / 2530) (Pelodictyon luteolum).